A 309-amino-acid polypeptide reads, in one-letter code: Porphobilinogen deaminase (309 aa).

Residue cysteine 241 is modified to S-(dipyrrolylmethanemethyl)cysteine.

Belongs to the HMBS family. As to quaternary structure, monomer. It depends on dipyrromethane as a cofactor.

The catalysed reaction is 4 porphobilinogen + H2O = hydroxymethylbilane + 4 NH4(+). It participates in porphyrin-containing compound metabolism; protoporphyrin-IX biosynthesis; coproporphyrinogen-III from 5-aminolevulinate: step 2/4. Functionally, tetrapolymerization of the monopyrrole PBG into the hydroxymethylbilane pre-uroporphyrinogen in several discrete steps. The protein is Porphobilinogen deaminase of Bacillus anthracis (strain A0248).